A 199-amino-acid chain; its full sequence is Inner membrane-spanning protein YciB (199 aa).

Helical transmembrane passes span 7-27 (HPLFKLATELGPLLVFFAANA), 32-52 (FVATAAFMVAIVAAMIASYVV), 56-76 (IPLMALVTGIVVIVFGTLTLV), 93-113 (LFAGVLGGGLLFGRSFIAIMF), 126-146 (VLTLRWALFFFGMAILNELIW), and 153-173 (FWVNFKVFGAVPLTMIFAMMQ).

Belongs to the YciB family.

Its subcellular location is the cell inner membrane. Functionally, plays a role in cell envelope biogenesis, maintenance of cell envelope integrity and membrane homeostasis. The sequence is that of Inner membrane-spanning protein YciB from Nitrobacter hamburgensis (strain DSM 10229 / NCIMB 13809 / X14).